We begin with the raw amino-acid sequence, 424 residues long: Serine--tRNA ligase (424 aa).

L-serine is bound at residue 230-232 (TAE). 261-263 (RSE) lines the ATP pocket. Glutamate 284 serves as a coordination point for L-serine. 348 to 351 (EISS) contributes to the ATP binding site. Position 382 (serine 382) interacts with L-serine.

The protein belongs to the class-II aminoacyl-tRNA synthetase family. Type-1 seryl-tRNA synthetase subfamily. In terms of assembly, homodimer. The tRNA molecule binds across the dimer.

It is found in the cytoplasm. The catalysed reaction is tRNA(Ser) + L-serine + ATP = L-seryl-tRNA(Ser) + AMP + diphosphate + H(+). It carries out the reaction tRNA(Sec) + L-serine + ATP = L-seryl-tRNA(Sec) + AMP + diphosphate + H(+). The protein operates within aminoacyl-tRNA biosynthesis; selenocysteinyl-tRNA(Sec) biosynthesis; L-seryl-tRNA(Sec) from L-serine and tRNA(Sec): step 1/1. In terms of biological role, catalyzes the attachment of serine to tRNA(Ser). Is also able to aminoacylate tRNA(Sec) with serine, to form the misacylated tRNA L-seryl-tRNA(Sec), which will be further converted into selenocysteinyl-tRNA(Sec). This chain is Serine--tRNA ligase, found in Solibacter usitatus (strain Ellin6076).